The primary structure comprises 193 residues: Probable nicotinate-nucleotide adenylyltransferase (193 aa).

It belongs to the NadD family.

The catalysed reaction is nicotinate beta-D-ribonucleotide + ATP + H(+) = deamido-NAD(+) + diphosphate. It participates in cofactor biosynthesis; NAD(+) biosynthesis; deamido-NAD(+) from nicotinate D-ribonucleotide: step 1/1. In terms of biological role, catalyzes the reversible adenylation of nicotinate mononucleotide (NaMN) to nicotinic acid adenine dinucleotide (NaAD). This Flavobacterium psychrophilum (strain ATCC 49511 / DSM 21280 / CIP 103535 / JIP02/86) protein is Probable nicotinate-nucleotide adenylyltransferase.